The sequence spans 428 residues: Adenylosuccinate synthetase (428 aa).

GTP contacts are provided by residues 12-18 (GDEGKGK) and 40-42 (GHT). Catalysis depends on Asp13, which acts as the Proton acceptor. 2 residues coordinate Mg(2+): Asp13 and Gly40. Residues 13–16 (DEGK), 38–41 (NAGH), Thr128, Arg142, Gln223, Thr238, and Arg302 contribute to the IMP site. His41 functions as the Proton donor in the catalytic mechanism. A substrate-binding site is contributed by 298 to 304 (VTTGRPR). Residues Arg304, 330-332 (KLD), and 412-414 (GTG) contribute to the GTP site.

This sequence belongs to the adenylosuccinate synthetase family. Homodimer. Mg(2+) is required as a cofactor.

It is found in the cytoplasm. The catalysed reaction is IMP + L-aspartate + GTP = N(6)-(1,2-dicarboxyethyl)-AMP + GDP + phosphate + 2 H(+). It participates in purine metabolism; AMP biosynthesis via de novo pathway; AMP from IMP: step 1/2. Its function is as follows. Plays an important role in the de novo pathway of purine nucleotide biosynthesis. Catalyzes the first committed step in the biosynthesis of AMP from IMP. In Bifidobacterium animalis subsp. lactis (strain AD011), this protein is Adenylosuccinate synthetase.